Here is a 189-residue protein sequence, read N- to C-terminus: Elongation factor P (189 aa).

Lysine 34 is modified (N6-(3,6-diaminohexanoyl)-5-hydroxylysine).

Belongs to the elongation factor P family. In terms of processing, may be beta-lysylated on the epsilon-amino group of Lys-34 by the combined action of EpmA and EpmB, and then hydroxylated on the C5 position of the same residue by EpmC (if this protein is present). Lysylation is critical for the stimulatory effect of EF-P on peptide-bond formation. The lysylation moiety may extend toward the peptidyltransferase center and stabilize the terminal 3-CCA end of the tRNA. Hydroxylation of the C5 position on Lys-34 may allow additional potential stabilizing hydrogen-bond interactions with the P-tRNA.

The protein localises to the cytoplasm. It participates in protein biosynthesis; polypeptide chain elongation. In terms of biological role, involved in peptide bond synthesis. Alleviates ribosome stalling that occurs when 3 or more consecutive Pro residues or the sequence PPG is present in a protein, possibly by augmenting the peptidyl transferase activity of the ribosome. Modification of Lys-34 is required for alleviation. The chain is Elongation factor P from Nitrosococcus oceani (strain ATCC 19707 / BCRC 17464 / JCM 30415 / NCIMB 11848 / C-107).